A 598-amino-acid polypeptide reads, in one-letter code: Major royal jelly protein 5 (598 aa).

The N-terminal stretch at 1 to 17 (MTTWLLLVVCLGIACQG) is a signal peptide. N-linked (GlcNAc...) asparagine glycans are attached at residues N148, N164, N181, and N324.

It belongs to the major royal jelly protein family. In terms of tissue distribution, found in and secreted from the hypopharyngeal glands of the worker honey bee (at protein level); expression peaks at 8 days post eclosion. Expressed in the brains of adult worker bees peaking at 12 days post eclosion (at protein level). Expressed in the spermatheca of adult queen bees (at protein level); Expression levels are higher in mated queens than in virgin queens. Expressed in the heads of worker bees after eclosion, expression dropping with age and detectable up to 26 days of age.

It is found in the secreted. Its function is as follows. Component of royal jelly, a substance produced in the hypopharyngeal gland containing proteins, free amino acids, fatty acids, sugars and other nutrients, which is fed to developing larvae by worker nurse bees. Major royal jelly proteins (MRJPs) are high in essential amino acids and probably have a nutritional function in larval food. All larvae are fed some royal jelly (also known as worker jelly) early in their development but it forms the principal source of nutrition for larvae destined to become queen bees. Produced in the spermatheca of adult queen bees, along with other major royal jelly proteins, where it may act as a nutrient supply for sperm stored by mated queens, or be involved in energy metabolism. In Apis mellifera (Honeybee), this protein is Major royal jelly protein 5.